The chain runs to 426 residues: 3-phosphoshikimate 1-carboxyvinyltransferase (426 aa).

Lysine 22, serine 23, and arginine 27 together coordinate 3-phosphoshikimate. Lysine 22 serves as a coordination point for phosphoenolpyruvate. Phosphoenolpyruvate contacts are provided by glycine 96 and arginine 124. 3-phosphoshikimate contacts are provided by serine 170, serine 171, glutamine 172, serine 198, aspartate 314, asparagine 337, and lysine 341. Phosphoenolpyruvate is bound at residue glutamine 172. Aspartate 314 (proton acceptor) is an active-site residue. Positions 345, 387, and 412 each coordinate phosphoenolpyruvate.

It belongs to the EPSP synthase family. In terms of assembly, monomer.

The protein resides in the cytoplasm. It carries out the reaction 3-phosphoshikimate + phosphoenolpyruvate = 5-O-(1-carboxyvinyl)-3-phosphoshikimate + phosphate. The protein operates within metabolic intermediate biosynthesis; chorismate biosynthesis; chorismate from D-erythrose 4-phosphate and phosphoenolpyruvate: step 6/7. Catalyzes the transfer of the enolpyruvyl moiety of phosphoenolpyruvate (PEP) to the 5-hydroxyl of shikimate-3-phosphate (S3P) to produce enolpyruvyl shikimate-3-phosphate and inorganic phosphate. The sequence is that of 3-phosphoshikimate 1-carboxyvinyltransferase from Shewanella loihica (strain ATCC BAA-1088 / PV-4).